We begin with the raw amino-acid sequence, 473 residues long: Catalase easC (473 aa).

A compositionally biased stretch (low complexity) spans 1-15 (MASEVSVASSGSEHS). Residues 1-31 (MASEVSVASSGSEHSGAQKCPFQDPGLSSMD) are disordered. His-54 is a catalytic residue. Tyr-344 contributes to the heme binding site. The tract at residues 352–389 (LGPNNLDLPANRTKKLADGSRPEKAEMAPQKVPSQEHA) is disordered. Residues 366 to 377 (KLADGSRPEKAE) show a composition bias toward basic and acidic residues.

Belongs to the catalase family. It depends on heme as a cofactor.

The protein operates within alkaloid biosynthesis; ergot alkaloid biosynthesis. Functionally, catalase; part of the gene cluster that mediates the biosynthesis of fungal ergot alkaloid. DmaW catalyzes the first step of ergot alkaloid biosynthesis by condensing dimethylallyl diphosphate (DMAP) and tryptophan to form 4-dimethylallyl-L-tryptophan. The second step is catalyzed by the methyltransferase easF that methylates 4-dimethylallyl-L-tryptophan in the presence of S-adenosyl-L-methionine, resulting in the formation of 4-dimethylallyl-L-abrine. The catalase easC and the FAD-dependent oxidoreductase easE then transform 4-dimethylallyl-L-abrine to chanoclavine-I which is further oxidized by easD in the presence of NAD(+), resulting in the formation of chanoclavine-I aldehyde. Agroclavine dehydrogenase easG then mediates the conversion of chanoclavine-I aldehyde to agroclavine via a non-enzymatic adduct reaction: the substrate is an iminium intermediate that is formed spontaneously from chanoclavine-I aldehyde in the presence of glutathione. The presence of easA is not required to complete this reaction. Further conversion of agroclavine to paspalic acid is a two-step process involving oxidation of agroclavine to elymoclavine and of elymoclavine to paspalic acid, the second step being performed by the elymoclavine oxidase cloA. Paspalic acid is then further converted to D-lysergic acid. Ergopeptines are assembled from D-lysergic acid and three different amino acids by the D-lysergyl-peptide-synthetases composed each of a monomudular and a trimodular nonribosomal peptide synthetase subunit. LpsB and lpsC encode the monomodular subunits responsible for D-lysergic acid activation and incorporation into the ergopeptine backbone. LpsA1 and A2 subunits encode the trimodular nonribosomal peptide synthetase assembling the tripeptide portion of ergopeptines. LpsA1 is responsible for formation of the major ergopeptine, ergotamine, and lpsA2 for alpha-ergocryptine, the minor ergopeptine of the total alkaloid mixture elaborated by C.purpurea. D-lysergyl-tripeptides are assembled by the nonribosomal peptide synthetases and released as N-(D-lysergyl-aminoacyl)-lactams. Cyclolization of the D-lysergyl-tripeptides is performed by the Fe(2+)/2-ketoglutarate-dependent dioxygenase easH which introduces a hydroxyl group into N-(D-lysergyl-aminoacyl)-lactam at alpha-C of the aminoacyl residue followed by spontaneous condensation with the terminal lactam carbonyl group. This is Catalase easC from Claviceps purpurea (strain 20.1) (Ergot fungus).